A 592-amino-acid polypeptide reads, in one-letter code: A-type ATP synthase subunit A (592 aa).

Residue 233–240 (GPFGSGKT) participates in ATP binding.

Belongs to the ATPase alpha/beta chains family. In terms of assembly, has multiple subunits with at least A(3), B(3), C, D, E, F, H, I and proteolipid K(x).

It is found in the cell membrane. The enzyme catalyses ATP + H2O + 4 H(+)(in) = ADP + phosphate + 5 H(+)(out). In terms of biological role, component of the A-type ATP synthase that produces ATP from ADP in the presence of a proton gradient across the membrane. The A chain is the catalytic subunit. The polypeptide is A-type ATP synthase subunit A (Saccharolobus islandicus (strain Y.G.57.14 / Yellowstone #1) (Sulfolobus islandicus)).